The chain runs to 277 residues: MDTILALKVIIMGIVEGLTEFLPISSTGHLILAGSLLEFTGPKVKVFEIAIQTGAMLAVVWEYRVKIAAVLGGLFTERRAQKFAVNIVVAFLPAALLGLVFAGAIKEKLFAPVPVAIAFIVGGFVILWVERRNKQQVHAERVQSVDEMTLLDAFKVGCAQAFALIPGTSRSGASIIGGMMFGLSRKAATEFSFFLAIPTLMGATVYSVYKDRALLSMADIPLFGLGGLAAFFSAFLCVRWLLRYISTHDFTFFAYYRIGFGLFVLLSAHYGWVVWAE.

5 consecutive transmembrane segments (helical) span residues 85–105, 109–129, 188–208, 218–238, and 256–276; these read VNIV…AGAI, LFAP…ILWV, ATEF…VYSV, ADIP…FLCV, and YRIG…VVWA.

The protein belongs to the UppP family.

Its subcellular location is the cell inner membrane. The catalysed reaction is di-trans,octa-cis-undecaprenyl diphosphate + H2O = di-trans,octa-cis-undecaprenyl phosphate + phosphate + H(+). Functionally, catalyzes the dephosphorylation of undecaprenyl diphosphate (UPP). Confers resistance to bacitracin. This Herminiimonas arsenicoxydans protein is Undecaprenyl-diphosphatase.